We begin with the raw amino-acid sequence, 158 residues long: S-ribosylhomocysteine lyase (158 aa).

Fe cation is bound by residues histidine 54, histidine 58, and cysteine 124.

The protein belongs to the LuxS family. Homodimer. Requires Fe cation as cofactor.

The enzyme catalyses S-(5-deoxy-D-ribos-5-yl)-L-homocysteine = (S)-4,5-dihydroxypentane-2,3-dione + L-homocysteine. Involved in the synthesis of autoinducer 2 (AI-2) which is secreted by bacteria and is used to communicate both the cell density and the metabolic potential of the environment. The regulation of gene expression in response to changes in cell density is called quorum sensing. Catalyzes the transformation of S-ribosylhomocysteine (RHC) to homocysteine (HC) and 4,5-dihydroxy-2,3-pentadione (DPD). This is S-ribosylhomocysteine lyase from Lactobacillus gasseri (strain ATCC 33323 / DSM 20243 / BCRC 14619 / CIP 102991 / JCM 1131 / KCTC 3163 / NCIMB 11718 / NCTC 13722 / AM63).